An 896-amino-acid polypeptide reads, in one-letter code: Glutamate receptor 2.4 (896 aa).

The first 24 residues, 1-24 (MKRHLNDVVLVFLVFIFGVKLGKG), serve as a signal peptide directing secretion. Over 25 to 565 (QNTTIQVINV…SSLIFFKPLT (541 aa)) the chain is Extracellular. N-linked (GlcNAc...) asparagine glycans are attached at residues asparagine 26, asparagine 46, asparagine 53, asparagine 204, asparagine 267, asparagine 331, asparagine 341, and asparagine 527. Residues 566 to 586 (PGLWGMTLGSFFVVGFVVWIL) traverse the membrane as a helical segment. Over 587 to 595 (EHRVNSEFT) the chain is Cytoplasmic. Residues 596–616 (GPPQYQISTMFWFAFSIMVFA) traverse the membrane as a helical segment. Topologically, residues 617–620 (PRER) are cytoplasmic. The helical transmembrane segment at 621–641 (VMSFTARVVVITWYFIVLVLT) threads the bilayer. The Extracellular segment spans residues 642–815 (QSYTASLSSL…VSFRKLSLDS (174 aa)). A helical membrane pass occupies residues 816–836 (FLLLFVAAATVCTLALLKFVI). Topologically, residues 837–896 (CFLIQNRIILNDEFYRGKRMKEMWLKFMESDGESYISRVRSTCPQVLIQPREEDIDPING) are cytoplasmic.

The protein belongs to the glutamate-gated ion channel (TC 1.A.10.1) family. May form heteromers. As to expression, expressed predominantly in roots.

It is found in the membrane. Glutamate-gated receptor that probably acts as a non-selective cation channel. May be involved in light-signal transduction and calcium homeostasis via the regulation of calcium influx into cells. This Arabidopsis thaliana (Mouse-ear cress) protein is Glutamate receptor 2.4 (GLR2.4).